The chain runs to 281 residues: MNIVHTIKDVKSIIKKWKDENLSIGYVPTMGYLHEGHASLIKKAREENDKVIVSIFVNPIQFGPKEDYSTYPRDLDKDSSLCEKFGADLVFNPETSEMYPNKIYSHVNVDILTENLCGEKRPVHFQGVCTVLTKFFNILNPTKAYFGEKDAQQLTVVKKMVEDLNFPIEIIGCPIIREEDGLAKSSRNAYLNKQERKSALILNKSLKEALKSLKSGEKDLNIIKNIIINTIMKEPLAKIDYISIVDSTTLQPVEKLQSSILIAIAVYIGKTRLIDNFTFKL.

30 to 37 (MGYLHEGH) is a binding site for ATP. Catalysis depends on His37, which acts as the Proton donor. (R)-pantoate is bound at residue Gln61. Gln61 is a beta-alanine binding site. 147–150 (GEKD) is a binding site for ATP. (R)-pantoate is bound at residue Gln153. Residues Ile176 and 184–187 (KSSR) contribute to the ATP site.

This sequence belongs to the pantothenate synthetase family. Homodimer.

It localises to the cytoplasm. It catalyses the reaction (R)-pantoate + beta-alanine + ATP = (R)-pantothenate + AMP + diphosphate + H(+). The protein operates within cofactor biosynthesis; (R)-pantothenate biosynthesis; (R)-pantothenate from (R)-pantoate and beta-alanine: step 1/1. Functionally, catalyzes the condensation of pantoate with beta-alanine in an ATP-dependent reaction via a pantoyl-adenylate intermediate. This chain is Pantothenate synthetase, found in Clostridium botulinum (strain Loch Maree / Type A3).